The primary structure comprises 184 residues: uncharacterized protein (184 aa).

This sequence belongs to the eIF-2B alpha/beta/delta subunits family.

This is an uncharacterized protein from Rhodospirillum rubrum.